A 252-amino-acid polypeptide reads, in one-letter code: Probable transcriptional regulatory protein HNE_0161 (252 aa).

Belongs to the TACO1 family.

Its subcellular location is the cytoplasm. In Hyphomonas neptunium (strain ATCC 15444), this protein is Probable transcriptional regulatory protein HNE_0161.